Consider the following 90-residue polypeptide: RNA silencing suppressor (90 aa).

The basic stretch occupies residues 15-18; that stretch reads KRRR.

The protein belongs to the carlaviruses nucleic acid-binding protein family.

Suppressor of viral-induced RNA silencing. The potential mechanism of action is based on sequestering siRNAs. In Grapevine virus A (isolate Is 151) (GVA), this protein is RNA silencing suppressor (ORF5).